The primary structure comprises 463 residues: Ribulose bisphosphate carboxylase large chain (463 aa).

K5 is modified (N6,N6,N6-trimethyllysine). Substrate-binding residues include N114 and T164. K166 functions as the Proton acceptor in the catalytic mechanism. K168 is a substrate binding site. Positions 192, 194, and 195 each coordinate Mg(2+). K192 carries the N6-carboxylysine modification. H285 (proton acceptor) is an active-site residue. 3 residues coordinate substrate: R286, H318, and S370.

It belongs to the RuBisCO large chain family. Type I subfamily. As to quaternary structure, heterohexadecamer of 8 large chains and 8 small chains; disulfide-linked. The disulfide link is formed within the large subunit homodimers. Requires Mg(2+) as cofactor. The disulfide bond which can form in the large chain dimeric partners within the hexadecamer appears to be associated with oxidative stress and protein turnover.

It is found in the plastid. The protein localises to the chloroplast. It carries out the reaction 2 (2R)-3-phosphoglycerate + 2 H(+) = D-ribulose 1,5-bisphosphate + CO2 + H2O. The catalysed reaction is D-ribulose 1,5-bisphosphate + O2 = 2-phosphoglycolate + (2R)-3-phosphoglycerate + 2 H(+). Functionally, ruBisCO catalyzes two reactions: the carboxylation of D-ribulose 1,5-bisphosphate, the primary event in carbon dioxide fixation, as well as the oxidative fragmentation of the pentose substrate in the photorespiration process. Both reactions occur simultaneously and in competition at the same active site. The chain is Ribulose bisphosphate carboxylase large chain from Pelargonium grandiflorum (Geranium).